The chain runs to 243 residues: Late expression factor 1 (243 aa).

This sequence belongs to the baculoviridae LEF-1 family.

In terms of biological role, required for late and very late gene expression. This Orgyia pseudotsugata multicapsid polyhedrosis virus (OpMNPV) protein is Late expression factor 1 (LEF-1).